Here is a 192-residue protein sequence, read N- to C-terminus: Transmembrane protein 276 (192 aa).

The N-terminal stretch at methionine 1–serine 32 is a signal peptide. Transmembrane regions (helical) follow at residues glycine 35–proline 55, alanine 63–valine 83, leucine 92–cysteine 112, and valine 114–threonine 134.

It is found in the membrane. The polypeptide is Transmembrane protein 276 (Mus musculus (Mouse)).